The chain runs to 1179 residues: Probable manganese-transporting ATPase PDR2 (1179 aa).

Topologically, residues Met-1–Lys-20 are cytoplasmic. Residues Gln-21–Ile-42 traverse the membrane as a helical segment. Residues Val-43–Asp-50 are Lumenal-facing. Residues Ala-51–Trp-71 traverse the membrane as a helical segment. At Ser-72–Lys-192 the chain is on the cytoplasmic side. Residues Leu-193–Leu-215 traverse the membrane as a helical segment. The Lumenal portion of the chain corresponds to Asp-216 to Phe-218. The helical transmembrane segment at Trp-219–Lys-238 threads the bilayer. Over Ser-239–Ser-402 the chain is Cytoplasmic. A helical membrane pass occupies residues Gly-403–Val-422. Over Lys-423–Leu-435 the chain is Lumenal. A helical transmembrane segment spans residues Leu-436–Met-453. Topologically, residues Glu-454–Thr-947 are cytoplasmic. The active-site 4-aspartylphosphate intermediate is the Asp-491. Mg(2+) is bound by residues Asp-812 and Asp-816. The interval Lys-833–Arg-880 is disordered. Residues Leu-948 to Val-967 form a helical membrane-spanning segment. Over Met-968–Gln-979 the chain is Lumenal. The helical transmembrane segment at Ala-980–Ala-997 threads the bilayer. The Cytoplasmic portion of the chain corresponds to Arg-998–Phe-1013. A helical membrane pass occupies residues Ser-1014–Tyr-1034. At Ser-1035–Val-1059 the chain is on the lumenal side. Residues Asn-1060 to Tyr-1079 form a helical membrane-spanning segment. Residues Met-1080 to Lys-1092 lie on the Cytoplasmic side of the membrane. The chain crosses the membrane as a helical span at residues Pro-1093–Ser-1110. Over Asp-1111–Gly-1128 the chain is Lumenal. A helical membrane pass occupies residues Leu-1129–Glu-1148. At Arg-1149–Val-1179 the chain is on the cytoplasmic side.

Belongs to the cation transport ATPase (P-type) (TC 3.A.3) family. Type V subfamily. Highly expressed in root meristem. Expressed in pavement cells of trichomes, stipules, stamens and pollen grains.

The protein localises to the endoplasmic reticulum membrane. It catalyses the reaction ATP + H2O = ADP + phosphate + H(+). Functionally, mediates manganese transport into the endoplasmic reticulum. The ATPase activity is required for cellular manganese homeostasis. Plays an important role in pollen and root development through its impact on protein secretion and transport processes. Functions together with LPR1 and LPR2 in a common pathway that adjusts root meristem activity to phosphate availability. Under phosphate limitation, restricts SHR movement in root meristem and is required for maintaining SCR expression in the root meristem stem-cell niche as well as for proximal meristem activity. Can complement the yeast spf1 mutant. The chain is Probable manganese-transporting ATPase PDR2 (PDR2) from Arabidopsis thaliana (Mouse-ear cress).